Consider the following 249-residue polypeptide: 2,3-bisphosphoglycerate-dependent phosphoglycerate mutase (249 aa).

Substrate contacts are provided by residues 8 to 15, 21 to 22, arginine 60, 87 to 90, lysine 98, 114 to 115, and 183 to 184; these read RHGESQWN, TG, ERHY, RR, and GN. Histidine 9 (tele-phosphohistidine intermediate) is an active-site residue. The active-site Proton donor/acceptor is the glutamate 87.

It belongs to the phosphoglycerate mutase family. BPG-dependent PGAM subfamily.

It catalyses the reaction (2R)-2-phosphoglycerate = (2R)-3-phosphoglycerate. Its pathway is carbohydrate degradation; glycolysis; pyruvate from D-glyceraldehyde 3-phosphate: step 3/5. Its function is as follows. Catalyzes the interconversion of 2-phosphoglycerate and 3-phosphoglycerate. The sequence is that of 2,3-bisphosphoglycerate-dependent phosphoglycerate mutase from Pelodictyon phaeoclathratiforme (strain DSM 5477 / BU-1).